Reading from the N-terminus, the 105-residue chain is Iron-sulfur cluster assembly protein CyaY (105 aa).

The protein belongs to the frataxin family.

Its function is as follows. Involved in iron-sulfur (Fe-S) cluster assembly. May act as a regulator of Fe-S biogenesis. In Paraburkholderia phymatum (strain DSM 17167 / CIP 108236 / LMG 21445 / STM815) (Burkholderia phymatum), this protein is Iron-sulfur cluster assembly protein CyaY.